The following is a 199-amino-acid chain: UPF0462 protein C4orf33 (199 aa).

Belongs to the UPF0462 family.

The chain is UPF0462 protein C4orf33 (C4orf33) from Homo sapiens (Human).